The following is a 194-amino-acid chain: Adenylate kinase isoenzyme 1 (194 aa).

M1 carries the post-translational modification N-acetylmethionine. Residue 18 to 23 (GSGKGT) coordinates ATP. Residue S38 is modified to Phosphoserine. The NMP stretch occupies residues 38-67 (STGDLLRAEVSSGSARGKMLSEIMEKGQLV). AMP contacts are provided by residues T39, R44, 65 to 67 (QLV), 94 to 97 (GYPR), and Q101. The LID stretch occupies residues 131–141 (KRGETSGRVDD). R132 serves as a coordination point for ATP. AMP is bound by residues R138 and R149. G177 contacts ATP.

The protein belongs to the adenylate kinase family. AK1 subfamily. In terms of assembly, monomer. Requires Mg(2+) as cofactor.

It localises to the cytoplasm. It carries out the reaction a ribonucleoside 5'-phosphate + ATP = a ribonucleoside 5'-diphosphate + ADP. It catalyses the reaction AMP + ATP = 2 ADP. The enzyme catalyses dAMP + ATP = dADP + ADP. The catalysed reaction is dATP + AMP = dADP + ADP. It carries out the reaction dAMP + dATP = 2 dADP. It catalyses the reaction a 2'-deoxyribonucleoside 5'-diphosphate + ATP = a 2'-deoxyribonucleoside 5'-triphosphate + ADP. The enzyme catalyses a ribonucleoside 5'-diphosphate + ATP = a ribonucleoside 5'-triphosphate + ADP. The catalysed reaction is CDP + GTP = CTP + GDP. It carries out the reaction GDP + ATP = GTP + ADP. It catalyses the reaction UDP + ATP = UTP + ADP. The enzyme catalyses GTP + UDP = UTP + GDP. The catalysed reaction is dTDP + GTP = dTTP + GDP. It carries out the reaction dCDP + GTP = dCTP + GDP. It catalyses the reaction dGDP + ATP = dGTP + ADP. The enzyme catalyses dADP + GTP = dATP + GDP. The catalysed reaction is thiamine diphosphate + ADP = thiamine triphosphate + AMP. Its function is as follows. Catalyzes the reversible transfer of the terminal phosphate group between ATP and AMP. Also displays broad nucleoside diphosphate kinase activity. Plays an important role in cellular energy homeostasis and in adenine nucleotide metabolism. Also catalyzes at a very low rate the synthesis of thiamine triphosphate (ThTP) from thiamine diphosphate (ThDP) and ADP. This chain is Adenylate kinase isoenzyme 1, found in Sus scrofa (Pig).